We begin with the raw amino-acid sequence, 735 residues long: MEEYLLPGESSNSCRTRRRSGSIFDRRDAIAHGSAYQKAAALVDLAEDGIGLPEEILEGASFEKAAELYFMFTRFDFLWSLNYLALVVLNFFEKPLWCSKHLAESCNNRDYYYLGELPFLTGAESLIFEGVTLLLLIIHILFPISYEGFNLYWRSLLNRLKVILLLILVADIVVYILLPADFYYLPFRIAPYLRVVFFILNIRELRDSFFILAGMLGTYLNVVALSALFLLFSSWLAYVFFEDTRQGKTTFTSYGTTLYQMFVLFTTSNNPDVWIPAYKDSRWYCLFFVLYVLLGVYFVTNLILAVVYDSFKSELVKQVADKDRLRLRTLKKAFSLIDEANNGLLNEKQCTLLFEELNKYRTLPKISGDDFKSIFNELDDTGDFKINLEEFADLCSAIGLRFQKEDSLPIFEACPNFYHSPASEKLRGFIRGATFEYIIVFVLLVNLVAVIIETTLDIQNNSGQTFWQKVEFTFGWLYVIEMALKVYTYGFENYWRDGQNRFDFIVTWVIVIGETTTFVAPDDLTFLSNGEWIRYLLIARMLRLIRLLMHVERYRAFVATFLTLIPSLMPYLGTIFCILCFYCSLGLQIFGGIVNTGNPNLAQTDLAGNDYLLFNFNDYPNGMVTLFNILVMGNWQVWMQSYKELTGTSWTYAYFVSFYLISVLWLLNLIVAFVLEAFQAEMDLEASARCVDGDDKEAKRERRRNVGTKTRSQRVDFLLHHMLRSELTECSNDNP.

The Cytoplasmic portion of the chain corresponds to 1 to 76 (MEEYLLPGES…ELYFMFTRFD (76 aa)). The chain crosses the membrane as a helical span at residues 77-97 (FLWSLNYLALVVLNFFEKPLW). At 98–125 (CSKHLAESCNNRDYYYLGELPFLTGAES) the chain is on the extracellular side. The chain crosses the membrane as a helical span at residues 126–146 (LIFEGVTLLLLIIHILFPISY). Topologically, residues 147–161 (EGFNLYWRSLLNRLK) are cytoplasmic. The chain crosses the membrane as a helical span at residues 162–182 (VILLLILVADIVVYILLPADF). Residue tyrosine 183 is a topological domain, extracellular. Residues 184 to 202 (YLPFRIAPYLRVVFFILNI) form a helical; Voltage-sensor membrane-spanning segment. Over 203–208 (RELRDS) the chain is Cytoplasmic. The chain crosses the membrane as a helical span at residues 209-229 (FFILAGMLGTYLNVVALSALF). Residues 230 to 248 (LLFSSWLAYVFFEDTRQGK) lie on the Extracellular side of the membrane. The pore-forming intramembrane region spans 249–263 (TTFTSYGTTLYQMFV). Residues 264 to 286 (LFTTSNNPDVWIPAYKDSRWYCL) are Extracellular-facing. A helical membrane pass occupies residues 287–307 (FFVLYVLLGVYFVTNLILAVV). Residues 308-431 (YDSFKSELVK…ASEKLRGFIR (124 aa)) are Cytoplasmic-facing. EF-hand domains are found at residues 325-360 (LRLRTLKKAFSLIDEANNGLLNEKQCTLLFEELNKY) and 366-401 (ISGDDFKSIFNELDDTGDFKINLEEFADLCSAIGLR). A helical membrane pass occupies residues 432-452 (GATFEYIIVFVLLVNLVAVII). Over 453 to 470 (ETTLDIQNNSGQTFWQKV) the chain is Extracellular. The N-linked (GlcNAc...) asparagine glycan is linked to asparagine 460. A helical membrane pass occupies residues 471-491 (EFTFGWLYVIEMALKVYTYGF). The Cytoplasmic portion of the chain corresponds to 492–501 (ENYWRDGQNR). Residues 502 to 522 (FDFIVTWVIVIGETTTFVAPD) form a helical membrane-spanning segment. The Extracellular segment spans residues 523–531 (DLTFLSNGE). Residues 532 to 549 (WIRYLLIARMLRLIRLLM) form a helical; Voltage-sensor membrane-spanning segment. At 550 to 560 (HVERYRAFVAT) the chain is on the cytoplasmic side. The chain crosses the membrane as a helical span at residues 561-581 (FLTLIPSLMPYLGTIFCILCF). The Extracellular segment spans residues 582–618 (YCSLGLQIFGGIVNTGNPNLAQTDLAGNDYLLFNFND). Residues 619–633 (YPNGMVTLFNILVMG) constitute an intramembrane region (pore-forming). The Extracellular segment spans residues 634-654 (NWQVWMQSYKELTGTSWTYAY). A helical transmembrane segment spans residues 655 to 675 (FVSFYLISVLWLLNLIVAFVL). Topologically, residues 676-735 (EAFQAEMDLEASARCVDGDDKEAKRERRRNVGTKTRSQRVDFLLHHMLRSELTECSNDNP) are cytoplasmic.

It belongs to the calcium channel alpha-1 subunit (TC 1.A.1.11) family. Two pore calcium channel subfamily. As to quaternary structure, homodimer.

The protein resides in the membrane. With respect to regulation, inhibited by Al(3+), La(3+) and Gd(3+). Up-regulated by H(2)O(2), cryptogein, salicylic acid (SA) and cold shock. Functions as a voltage-gated inward-rectifying Ca(2+) channel (VDCC) across the plasma membrane that mediates sucrose-induced Ca(2+) influx in autotrophically grown leaf cells. Acts as the major ROS-responsive Ca(2+) channel and is the possible target of Al-dependent inhibition. Plays a regulatory role in defense responses. This Nicotiana tabacum (Common tobacco) protein is Two pore calcium channel protein 1B (TPC1B).